A 352-amino-acid polypeptide reads, in one-letter code: Trifunctional sesterterpene/triterpene/sesquarterpene synthase (352 aa).

Belongs to the large terpene synthase family.

It catalyses the reaction (2E,6E,10E,14E)-geranylfarnesyl diphosphate = beta-geranylfarnesene + diphosphate. The enzyme catalyses all-trans-hexaprenyl diphosphate = beta-hexaprene + diphosphate. The catalysed reaction is all-trans-heptaprenyl diphosphate = beta-heptaprene + diphosphate. Catalyzes the conversion of geranylfarnesyl diphosphate (GFPP) and hexaprenyl diphosphate (HexPP) into beta-geranylfarnesene and beta-hexaprene, respectively. Also produces beta-heptaprene from heptaprenyl diphosphate (HepPP) as a minor product. The polypeptide is Trifunctional sesterterpene/triterpene/sesquarterpene synthase (Shouchella clausii (Alkalihalobacillus clausii)).